A 241-amino-acid polypeptide reads, in one-letter code: uncharacterized protein (241 aa).

In terms of domain architecture, HTH luxR-type spans 147–212 (FSYRSVILTL…EMYAWINSAQ (66 aa)).

This is an uncharacterized protein from Escherichia coli O157:H7.